Consider the following 445-residue polypeptide: 3-phosphoshikimate 1-carboxyvinyltransferase (445 aa).

Positions M1–P25 are disordered. The 3-phosphoshikimate site is built by K28, S29, and R33. Residue K28 coordinates phosphoenolpyruvate. The phosphoenolpyruvate site is built by G101 and R129. Positions 174, 176, 326, and 353 each coordinate 3-phosphoshikimate. Q176 contributes to the phosphoenolpyruvate binding site. D326 serves as the catalytic Proton acceptor. 2 residues coordinate phosphoenolpyruvate: R357 and R400.

Belongs to the EPSP synthase family. Monomer.

It localises to the cytoplasm. The catalysed reaction is 3-phosphoshikimate + phosphoenolpyruvate = 5-O-(1-carboxyvinyl)-3-phosphoshikimate + phosphate. It participates in metabolic intermediate biosynthesis; chorismate biosynthesis; chorismate from D-erythrose 4-phosphate and phosphoenolpyruvate: step 6/7. Functionally, catalyzes the transfer of the enolpyruvyl moiety of phosphoenolpyruvate (PEP) to the 5-hydroxyl of shikimate-3-phosphate (S3P) to produce enolpyruvyl shikimate-3-phosphate and inorganic phosphate. The sequence is that of 3-phosphoshikimate 1-carboxyvinyltransferase from Cereibacter sphaeroides (strain ATCC 17029 / ATH 2.4.9) (Rhodobacter sphaeroides).